Consider the following 2084-residue polypeptide: RNA-directed RNA polymerase L (2084 aa).

The segment at 20-221 is endonuclease; sequence EPGLYDQIYD…IELQKSEEEL (202 aa). Positions 80, 112, and 126 each coordinate Mn(2+). The For endonuclease activity role is filled by K145. Residues 969-1172 enclose the RdRp catalytic domain; sequence SARSLGPGSI…FGIYSSEKST (204 aa). A Mg(2+)-binding site is contributed by D1127. The segment at 1695–1810 is cap-binding; sequence AQSGTLGGFS…TDGCPVRIME (116 aa).

The protein belongs to the Bunyavirales RNA polymerase family. Homomultimer. Interacts with the glycoprotein N; this interaction allows efficient polymerase packaging into virus particles. Interacts with nucleoprotein N. Mn(2+) serves as cofactor. It depends on Mg(2+) as a cofactor.

The protein localises to the host Golgi apparatus. It is found in the host endoplasmic reticulum. The protein resides in the host endoplasmic reticulum-Golgi intermediate compartment. It localises to the virion. It catalyses the reaction RNA(n) + a ribonucleoside 5'-triphosphate = RNA(n+1) + diphosphate. With respect to regulation, inhibited by Baloxavir acid (BXA). Functionally, RNA-dependent RNA polymerase, which is responsible for the replication and transcription of the viral RNA genome using antigenomic RNA as an intermediate. During transcription, synthesizes subgenomic RNAs and assures their capping by a cap-snatching mechanism, which involves the endonuclease activity cleaving the host capped pre-mRNAs. These short capped RNAs are then used as primers for viral transcription. The 3'-end of subgenomic mRNAs molecules are not polyadenylated. During replication, the polymerase binds the 5' and 3' vRNA extremities at distinct sites. In turn, significant conformational changes occur in the polymerase and in vRNA to initiate active RNA synthesis. As a consequence of the use of the same enzyme for both transcription and replication, these mechanisms need to be well coordinated. The polypeptide is RNA-directed RNA polymerase L (Dabie bandavirus (Severe fever with thrombocytopenia virus)).